The chain runs to 322 residues: Cyclin mcs2 (322 aa).

At Ser-310 the chain carries Phosphoserine.

The protein belongs to the cyclin family. Cyclin C subfamily. One of the nine subunits forming the core-TFIIH basal transcription factor. Interacts with crk1 and skp1.

It localises to the nucleus. In terms of biological role, essential for progression through the cell cycle. Possesses kinase activity that can be detected when myelin basic protein (MBP) is provided as an exogenous substrate. The polypeptide is Cyclin mcs2 (mcs2) (Schizosaccharomyces pombe (strain 972 / ATCC 24843) (Fission yeast)).